Reading from the N-terminus, the 318-residue chain is Ribose-phosphate pyrophosphokinase 2 (318 aa).

96–101 (RQDKKD) contributes to the ATP binding site. Mg(2+) is bound by residues Asp-128, His-130, Asp-139, and Asp-143. Position 130 (His-130) interacts with ATP. The segment at 212-227 (KDRVAILVDDMADTCG) is binding of phosphoribosylpyrophosphate.

It belongs to the ribose-phosphate pyrophosphokinase family. As to quaternary structure, homodimer. The active form is probably a hexamer composed of 3 homodimers. Requires Mg(2+) as cofactor.

The catalysed reaction is D-ribose 5-phosphate + ATP = 5-phospho-alpha-D-ribose 1-diphosphate + AMP + H(+). The protein operates within metabolic intermediate biosynthesis; 5-phospho-alpha-D-ribose 1-diphosphate biosynthesis; 5-phospho-alpha-D-ribose 1-diphosphate from D-ribose 5-phosphate (route I): step 1/1. With respect to regulation, activated by magnesium and inorganic phosphate. Competitively or non-competitively inhibited by ADP, 2,3-bisphosphoglyceride or GDP. Its function is as follows. Catalyzes the synthesis of phosphoribosylpyrophosphate (PRPP) that is essential for nucleotide synthesis. The protein is Ribose-phosphate pyrophosphokinase 2 (prps2) of Xenopus laevis (African clawed frog).